Reading from the N-terminus, the 235-residue chain is 1-(5-phosphoribosyl)-5-[(5-phosphoribosylamino)methylideneamino] imidazole-4-carboxamide isomerase (235 aa).

Catalysis depends on D8, which acts as the Proton acceptor. The active-site Proton donor is D127.

The protein belongs to the HisA/HisF family.

It is found in the cytoplasm. It catalyses the reaction 1-(5-phospho-beta-D-ribosyl)-5-[(5-phospho-beta-D-ribosylamino)methylideneamino]imidazole-4-carboxamide = 5-[(5-phospho-1-deoxy-D-ribulos-1-ylimino)methylamino]-1-(5-phospho-beta-D-ribosyl)imidazole-4-carboxamide. Its pathway is amino-acid biosynthesis; L-histidine biosynthesis; L-histidine from 5-phospho-alpha-D-ribose 1-diphosphate: step 4/9. This chain is 1-(5-phosphoribosyl)-5-[(5-phosphoribosylamino)methylideneamino] imidazole-4-carboxamide isomerase, found in Nautilia profundicola (strain ATCC BAA-1463 / DSM 18972 / AmH).